A 204-amino-acid polypeptide reads, in one-letter code: Transcription initiation factor TFIID subunit 11b (204 aa).

The interval 38–60 (PFEAAMEEQEESPVETEQTLEGD) is disordered. Acidic residues predominate over residues 42–58 (AMEEQEESPVETEQTLE). One can recognise a Histone-fold domain in the interval 106–195 (FTEEQMSRYE…RRLKLQGKVP (90 aa)).

Belongs to the TAF11 family. Component of the TFIID complex. TFIID is composed of TATA binding protein (TBP) and a number of TBP-associated factors (TAFs) whose MWs range from 14-217 kDa. Expressed in roots, leaves and inflorescences.

It is found in the nucleus. Its function is as follows. TAFs are components of the transcription factor IID (TFIID) complex that is essential for mediating regulation of RNA polymerase transcription. This chain is Transcription initiation factor TFIID subunit 11b (TAF11B), found in Arabidopsis thaliana (Mouse-ear cress).